The primary structure comprises 340 residues: Central glycolytic genes regulator (340 aa).

Residues 37 to 56 constitute a DNA-binding region (H-T-H motif); sequence RRSLSASLGISERVLRGEVQ. Beta-D-fructose 1,6-bisphosphate is bound by residues 149 to 152, Arg-175, Gln-185, 250 to 251, Glu-269, and Lys-310; these read GGTT and RR.

Belongs to the SorC transcriptional regulatory family. Homotetramer. Binds primarily as a dimer to each half-site of the full-length operator, with much higher affinity for the right site. Then, both dimers interact, bridging the two-half sites of the operator region.

Its activity is regulated as follows. Stability and function are regulated by the effector molecule fructose-1,6-bisphosphate (FBP). In the presence of glucose, binding of FBP to the low-affinity sugar-binding site of CggR disrupts dimer/dimer bridging interactions and triggers a tetramer to dimer transition, which leaves two physically independent dimers on the target DNA and allows transcription of the downstream coding sequences by the RNA polymerase. In addition, FBP and several other phosphorylated compounds can bind to a high-affinity binding-site and protect CggR against aggregation and proteolysis. In the absence of glucose, represses the transcription of the gapA operon, which encodes five key glycolytic enzymes. Binds specifically to the cggR-gapA promoter region and blocks the progression of the RNA polymerase, leading to the arrest of the transcription. The protein is Central glycolytic genes regulator (cggR) of Bacillus subtilis (strain 168).